A 429-amino-acid chain; its full sequence is GTPase Obg (429 aa).

One can recognise an Obg domain in the interval 1–158; sequence MFVDQVKIYV…RNVQLELKVL (158 aa). A disordered region spans residues 124 to 145; it reads RGNKRFATPANPAPELSENGEP. One can recognise an OBG-type G domain in the interval 159 to 329; the sequence is ADVGLVGFPS…LLLAIADKLE (171 aa). Residues 165–172, 190–194, 212–215, 282–285, and 310–312 contribute to the GTP site; these read GFPSVGKS, FTTIV, DLPG, NKMD, and SAV. Mg(2+) contacts are provided by serine 172 and threonine 192. Positions 351 to 429 constitute an OCT domain; that stretch reads KYVAEEPDFE…LLDYEFEFMD (79 aa).

The protein belongs to the TRAFAC class OBG-HflX-like GTPase superfamily. OBG GTPase family. Monomer. The cofactor is Mg(2+).

The protein resides in the cytoplasm. Functionally, an essential GTPase which binds GTP, GDP and possibly (p)ppGpp with moderate affinity, with high nucleotide exchange rates and a fairly low GTP hydrolysis rate. Plays a role in control of the cell cycle, stress response, ribosome biogenesis and in those bacteria that undergo differentiation, in morphogenesis control. In Listeria monocytogenes serotype 4b (strain F2365), this protein is GTPase Obg.